We begin with the raw amino-acid sequence, 361 residues long: Beta-hexosaminidase (361 aa).

Substrate-binding positions include Asp69, Arg77, Arg144, and 174–175 (KH). Catalysis depends on His187, which acts as the Proton donor/acceptor. Asp258 acts as the Nucleophile in catalysis.

It belongs to the glycosyl hydrolase 3 family. NagZ subfamily.

It localises to the cytoplasm. The enzyme catalyses Hydrolysis of terminal non-reducing N-acetyl-D-hexosamine residues in N-acetyl-beta-D-hexosaminides.. It participates in cell wall biogenesis; peptidoglycan recycling. Functionally, plays a role in peptidoglycan recycling by cleaving the terminal beta-1,4-linked N-acetylglucosamine (GlcNAc) from peptide-linked peptidoglycan fragments, giving rise to free GlcNAc, anhydro-N-acetylmuramic acid and anhydro-N-acetylmuramic acid-linked peptides. The polypeptide is Beta-hexosaminidase (Neisseria gonorrhoeae (strain NCCP11945)).